The sequence spans 131 residues: MRHGNGLRKLNRTSSHRLAMLRNMSNSLLEHEVIKTTLPKAKELRMVVEPLITLGKKDNLANRRLAFNRTRDRDFVTKLFTELGPRYATRPGGYLRILKFGFRHGDNAPMALVELVDRPEVEETAAVAEEA.

The protein belongs to the bacterial ribosomal protein bL17 family. In terms of assembly, part of the 50S ribosomal subunit. Contacts protein L32.

The polypeptide is Large ribosomal subunit protein bL17 (Polynucleobacter necessarius subsp. necessarius (strain STIR1)).